A 162-amino-acid chain; its full sequence is Putative 4-hydroxy-4-methyl-2-oxoglutarate aldolase (162 aa).

Substrate-binding positions include 75–78 and Arg-97; that span reads GDML. Asp-98 provides a ligand contact to a divalent metal cation.

Belongs to the class II aldolase/RraA-like family. Homotrimer. It depends on a divalent metal cation as a cofactor.

It catalyses the reaction 4-hydroxy-4-methyl-2-oxoglutarate = 2 pyruvate. The catalysed reaction is oxaloacetate + H(+) = pyruvate + CO2. Functionally, catalyzes the aldol cleavage of 4-hydroxy-4-methyl-2-oxoglutarate (HMG) into 2 molecules of pyruvate. Also contains a secondary oxaloacetate (OAA) decarboxylase activity due to the common pyruvate enolate transition state formed following C-C bond cleavage in the retro-aldol and decarboxylation reactions. This is Putative 4-hydroxy-4-methyl-2-oxoglutarate aldolase from Pseudomonas syringae pv. tomato (strain ATCC BAA-871 / DC3000).